We begin with the raw amino-acid sequence, 182 residues long: LPS-assembly lipoprotein LptE (182 aa).

Residues 1–19 (MRHRILTLLLGLAVLVTAG) form the signal peptide. Residue cysteine 20 is the site of N-palmitoyl cysteine attachment. Cysteine 20 is lipidated: S-diacylglycerol cysteine.

The protein belongs to the LptE lipoprotein family. Component of the lipopolysaccharide transport and assembly complex. Interacts with LptD.

It is found in the cell outer membrane. Functionally, together with LptD, is involved in the assembly of lipopolysaccharide (LPS) at the surface of the outer membrane. Required for the proper assembly of LptD. Binds LPS and may serve as the LPS recognition site at the outer membrane. This is LPS-assembly lipoprotein LptE from Photorhabdus laumondii subsp. laumondii (strain DSM 15139 / CIP 105565 / TT01) (Photorhabdus luminescens subsp. laumondii).